A 401-amino-acid chain; its full sequence is MVKMRRITPTRLLFTCRYISNNASPPVQPLNVLFFGSDTFSNFSLQALNELRQNNGSCGIVDNIQVVTRSPKWCGRQKSILKYPPIFDMAEKLQLPRPITCDTKQEMLALSKLTPSRQGNPENDGSGAPFNAIIAVSFGKLIPGDLIRAVPLALNVHPSLLPRHKGSAPIQRALLEGDTYTGVTIQTLHPDRFDHGAIVAQTEPLAIATMLSKGRVNDSTADFNSEGLPRRTAILMDQLGALGAQLLGQTLRERLYLPQNRVQAPTAYKPSYAHRITTEDKRIHWARDSAAELLNKLETLGPLHAFKEATAARKDAQNSVLKRILFHECKVMRDARLDNGSKPGMFKYDDIKDCILVTCRGNLLLCVSRLQFEGFAVERAGQFMARLRKRCGALSEKLVFL.

The transit peptide at 1 to 26 (MVKMRRITPTRLLFTCRYISNNASPP) directs the protein to the mitochondrion. (6R)-10-formyltetrahydrofolate is bound by residues 18-20 (YIS) and 66-70 (VVTRS).

It belongs to the Fmt family. Phosphorylated by GCN2 in response to nutrient deprivation. Phosphorylation mediates retention of FMT1 in the cytoplasm.

The protein resides in the mitochondrion. It localises to the mitochondrion matrix. The protein localises to the cytoplasm. The catalysed reaction is L-methionyl-tRNA(fMet) + (6R)-10-formyltetrahydrofolate = N-formyl-L-methionyl-tRNA(fMet) + (6S)-5,6,7,8-tetrahydrofolate + H(+). Formylates methionyl-tRNA in mitochondria and the cytoplasm. Responsible for the formylation of the 8 N-terminally formylated (Nt-formylated) mitochondrial matrix proteins that are encoded by mitochondrial DNA. Nt-formylated proteins in the cytoplasm are strongly up-regulated in stationary phase or upon starvation for specific amino acids (His or Lys) and are targeted for degradation by a PSH1 E3 ubiquitin ligase-mediated fMet/N-end rule pathway. Increased Nt-formylation of cytosolic proteins appears to be important for adaptation to these stresses. Stationary phase-degraded Nt-formylated proteins include histone H3-like centromeric protein CSE4, Mediator complex subunit 3 (PGD1) and small ribosomal subunit protein uS8-A (RPS22A). The chain is Methionyl-tRNA formyltransferase, mitochondrial (FMT1) from Saccharomyces cerevisiae (strain ATCC 204508 / S288c) (Baker's yeast).